Here is a 236-residue protein sequence, read N- to C-terminus: Phosphoribosylaminoimidazole-succinocarboxamide synthase (236 aa).

This sequence belongs to the SAICAR synthetase family.

The catalysed reaction is 5-amino-1-(5-phospho-D-ribosyl)imidazole-4-carboxylate + L-aspartate + ATP = (2S)-2-[5-amino-1-(5-phospho-beta-D-ribosyl)imidazole-4-carboxamido]succinate + ADP + phosphate + 2 H(+). Its pathway is purine metabolism; IMP biosynthesis via de novo pathway; 5-amino-1-(5-phospho-D-ribosyl)imidazole-4-carboxamide from 5-amino-1-(5-phospho-D-ribosyl)imidazole-4-carboxylate: step 1/2. In Campylobacter jejuni (strain RM1221), this protein is Phosphoribosylaminoimidazole-succinocarboxamide synthase.